The following is a 211-amino-acid chain: GATA transcription factor 19 (211 aa).

A GATA-type zinc finger spans residues 77–102 (CANCDTTSTPLWRNGPRGPKSLCNAC). The interval 111 to 131 (RRASTARNSTSGGGSTAAGVP) is disordered.

The protein belongs to the type IV zinc-finger family. Class B subfamily. Forms heterodimers with GATA18.

Its subcellular location is the nucleus. In terms of biological role, transcriptional regulator that specifically binds 5'-GATA-3' or 5'-GAT-3' motifs within gene promoters. Regulates both flower and shoot apical meristem (SAM) development, especially for establishing organ boundaries in shoots and flowers, probably by controlling the number and position of WUS-expressing cells. This is GATA transcription factor 19 from Arabidopsis thaliana (Mouse-ear cress).